The following is a 400-amino-acid chain: NADH-quinone oxidoreductase subunit D (400 aa).

It belongs to the complex I 49 kDa subunit family. As to quaternary structure, NDH-1 is composed of 14 different subunits. Subunits NuoB, C, D, E, F, and G constitute the peripheral sector of the complex.

The protein resides in the cell inner membrane. It carries out the reaction a quinone + NADH + 5 H(+)(in) = a quinol + NAD(+) + 4 H(+)(out). Functionally, NDH-1 shuttles electrons from NADH, via FMN and iron-sulfur (Fe-S) centers, to quinones in the respiratory chain. The immediate electron acceptor for the enzyme in this species is believed to be a menaquinone. Couples the redox reaction to proton translocation (for every two electrons transferred, four hydrogen ions are translocated across the cytoplasmic membrane), and thus conserves the redox energy in a proton gradient. This chain is NADH-quinone oxidoreductase subunit D, found in Chlorobium phaeobacteroides (strain DSM 266 / SMG 266 / 2430).